We begin with the raw amino-acid sequence, 310 residues long: Methionyl-tRNA formyltransferase (310 aa).

Residue 112–115 (SLLP) participates in (6S)-5,6,7,8-tetrahydrofolate binding.

Belongs to the Fmt family.

The catalysed reaction is L-methionyl-tRNA(fMet) + (6R)-10-formyltetrahydrofolate = N-formyl-L-methionyl-tRNA(fMet) + (6S)-5,6,7,8-tetrahydrofolate + H(+). In terms of biological role, attaches a formyl group to the free amino group of methionyl-tRNA(fMet). The formyl group appears to play a dual role in the initiator identity of N-formylmethionyl-tRNA by promoting its recognition by IF2 and preventing the misappropriation of this tRNA by the elongation apparatus. This is Methionyl-tRNA formyltransferase from Pelagibacter ubique (strain HTCC1062).